Here is a 217-residue protein sequence, read N- to C-terminus: Pyridoxine/pyridoxamine 5'-phosphate oxidase (217 aa).

Substrate contacts are provided by residues 14–17 (RKSY) and lysine 72. FMN contacts are provided by residues 67–72 (RVVLIK), 82–83 (YT), arginine 88, and lysine 89. Substrate contacts are provided by tyrosine 129, arginine 133, and serine 137. FMN is bound by residues 146–147 (QS) and tryptophan 190. Position 196-198 (196-198 (RLH)) interacts with substrate. Arginine 200 is an FMN binding site.

It belongs to the pyridoxamine 5'-phosphate oxidase family. In terms of assembly, homodimer. The cofactor is FMN.

The catalysed reaction is pyridoxamine 5'-phosphate + O2 + H2O = pyridoxal 5'-phosphate + H2O2 + NH4(+). It catalyses the reaction pyridoxine 5'-phosphate + O2 = pyridoxal 5'-phosphate + H2O2. It functions in the pathway cofactor metabolism; pyridoxal 5'-phosphate salvage; pyridoxal 5'-phosphate from pyridoxamine 5'-phosphate: step 1/1. Its pathway is cofactor metabolism; pyridoxal 5'-phosphate salvage; pyridoxal 5'-phosphate from pyridoxine 5'-phosphate: step 1/1. Its function is as follows. Catalyzes the oxidation of either pyridoxine 5'-phosphate (PNP) or pyridoxamine 5'-phosphate (PMP) into pyridoxal 5'-phosphate (PLP). The chain is Pyridoxine/pyridoxamine 5'-phosphate oxidase from Acidovorax sp. (strain JS42).